Here is a 694-residue protein sequence, read N- to C-terminus: MSDQEFGLDAIRNIGIMAHIDAGKTTTTERILFYAGRTHKIGEVHEGGATMDWMEQEQERGITITSAATTVFWLGSKINIIDTPGHVDFTIEVERSLRVLDGAVAVFDAVSGVEPQSETVWRQANKYGVPRVAFVNKMDRMGANYFGAVESMREKLGANAIPVHCPIGAESQFVGMVDLISQKALYFLDDSLGAKWEEREIPEDLQEQCEVLRMQLLEELATVDETNEAFMEKVLEAPESITEEEIHRVMRKGVIEGKINPVLCGSAFKNKGVQQLLDVIVKWLPSPLDRGNVRGMNLKTGEEVCLKPSKDGPLAALAFKIMTDPYVGRITFIRIYSGTLKKGSAILNSTKDKKERISRLLEMHANERTDRDEFTVGDIGACVGLKFSVTGDTLCDENQEIVLERIEAPEPVIDMAIEPKSKGDREKLAQALSALSEEDPTFRVSTNEETGQTIISGMGELHLDILRDRMIREFKVEANVGKPQVSYKETITKASDSETKYVKQSGGRGQYAHVCLEIEPNEPGKGNEVVSKIVGGVIPKEYIPAVIKGVEEGLNSGVLAGYGLVDVKVSIVFGSYHEVDSSEMAFKICGSMAVKEACRKALPVILEPIMKVTVITPEDHLGDVIGDLNRRRGKILGQEASRNMAQVNAEVPLSEMFGYMTSLRSLTSGRATSTMEPAFFAKVPQKIQEEIVKK.

Positions 9-288 (DAIRNIGIMA…VIVKWLPSPL (280 aa)) constitute a tr-type G domain. Residues 18 to 25 (AHIDAGKT), 82 to 86 (DTPGH), and 136 to 139 (NKMD) contribute to the GTP site.

This sequence belongs to the TRAFAC class translation factor GTPase superfamily. Classic translation factor GTPase family. EF-G/EF-2 subfamily.

Its subcellular location is the cytoplasm. In terms of biological role, catalyzes the GTP-dependent ribosomal translocation step during translation elongation. During this step, the ribosome changes from the pre-translocational (PRE) to the post-translocational (POST) state as the newly formed A-site-bound peptidyl-tRNA and P-site-bound deacylated tRNA move to the P and E sites, respectively. Catalyzes the coordinated movement of the two tRNA molecules, the mRNA and conformational changes in the ribosome. The protein is Elongation factor G (fusA) of Chlamydia muridarum (strain MoPn / Nigg).